We begin with the raw amino-acid sequence, 1876 residues long: Phenolphthiocerol/phthiocerol polyketide synthase subunit A (1876 aa).

The 75-residue stretch at 9–83 (ADLRHWLIDY…ALAAYLAAPE (75 aa)) folds into the Carrier 1 domain. An O-(pantetheine 4'-phosphoryl)serine modification is found at serine 43. The 426-residue stretch at 101–526 (DEPIAVVGMG…GTNAHVVIEQ (426 aa)) folds into the Ketosynthase family 3 (KS3) domain. Residues cysteine 273, histidine 408, and histidine 448 each act as for beta-ketoacyl synthase activity in the active site. The interval 624–950 (EGSPGPGTVF…NLNKAHTIHP (327 aa)) is acyltransferase. Serine 720 serves as the catalytic For malonyltransferase activity. The interval 997–1112 (HTTVATVSAS…AQLSSSPSDS (116 aa)) is N-terminal hotdog fold. The PKS/mFAS DH domain occupies 997 to 1267 (HTTVATVSAS…YRALDFGLDV (271 aa)). Histidine 1027 acts as the Proton acceptor; for dehydratase activity in catalysis. The disordered stretch occupies residues 1104–1130 (QLSSSPSDSASSLNEHHRANGQPPERA). Residues 1106–1115 (SSSPSDSASS) are compositionally biased toward low complexity. The C-terminal hotdog fold stretch occupies residues 1130–1267 (AHRDLIPDLA…YRALDFGLDV (138 aa)). The Proton donor; for dehydratase activity role is filled by aspartate 1186. The tract at residues 1491-1728 (AAYLITGGLG…DGYDVAQAVV (238 aa)) is beta-ketoacyl reductase. Position 1492 to 1551 (1492 to 1551 (AYLITGGLGALGLLMADWLADRGAHRLVLTGRTPLPPRRDWQLDTLDTELRRRIDAIRAL)) interacts with NADP(+). Residues 1759–1836 (EVRSELEQGL…SLASYLAKRV (78 aa)) enclose the Carrier 2 domain. The residue at position 1796 (serine 1796) is an O-(pantetheine 4'-phosphoryl)serine.

It depends on NADP(+) as a cofactor. The cofactor is pantetheine 4'-phosphate.

It catalyses the reaction icosanoyl-[(phenol)carboxyphthiodiolenone synthase] + 2 (S)-methylmalonyl-CoA + 3 malonyl-CoA + 5 NADPH + 10 H(+) = C32-carboxyphthiodiolenone-[(phenol)carboxyphthiodiolenone synthase] + 5 CO2 + 5 NADP(+) + 5 CoA + 2 H2O. It carries out the reaction docosanoyl-[(phenol)carboxyphthiodiolenone synthase] + 2 (S)-methylmalonyl-CoA + 3 malonyl-CoA + 5 NADPH + 10 H(+) = C34-carboxyphthiodiolenone-[(phenol)carboxyphthiodiolenone synthase] + 5 CO2 + 5 NADP(+) + 5 CoA + 2 H2O. The enzyme catalyses 17-(4-hydroxyphenyl)heptadecanoyl-[(phenol)carboxyphthiodiolenone synthase] + 2 (S)-methylmalonyl-CoA + 3 malonyl-CoA + 5 NADPH + 10 H(+) = C35-(phenol)carboxyphthiodiolenone-[(phenol)carboxyphthiodiolenone synthase] + 5 CO2 + 5 NADP(+) + 5 CoA + 2 H2O. The catalysed reaction is 19-(4-hydroxyphenyl)nonadecanoyl-[(phenol)carboxyphthiodiolenone synthase] + 2 (S)-methylmalonyl-CoA + 3 malonyl-CoA + 5 NADPH + 10 H(+) = C37-(phenol)carboxyphthiodiolenone-[(phenol)carboxyphthiodiolenone synthase] + 5 CO2 + 5 NADP(+) + 5 CoA + 2 H2O. It functions in the pathway lipid metabolism; fatty acid biosynthesis. Its function is as follows. Part of the PpsABCDE complex involved in the biosynthesis of the lipid core common to phthiocerols and phenolphthiocerols by successive additions of malonyl-CoA or methylmalonyl-CoA extender units. PpsA can accept as substrate the activated forms of either icosanoyl (C20), docosanoyl (C22) or lignoceroyl (C24) groups from FadD26, or a (4-hydroxyphenyl)-C17 or (4-hydroxyphenyl)-C19 fatty acyl from FadD29. PpsA initiates the biosynthesis and extends its substrate using a malonyl-CoA extender unit. The PpsB and PpsC proteins add the second and third malonyl-CoA extender units. PpsD adds an (R)-methylmalonyl unit and PpsE adds a second (R)-methylmalonyl unit. The incorporation of the methylmalonyl units results in formation of two branched methyl groups in the elongated product. The chain is Phenolphthiocerol/phthiocerol polyketide synthase subunit A (ppsA) from Mycobacterium bovis (strain ATCC BAA-935 / AF2122/97).